Reading from the N-terminus, the 152-residue chain is ESAT-6 secretion machinery protein EssA (152 aa).

Over 1–114 (MLMNSVIALT…PYIQNKQEKK (114 aa)) the chain is Cytoplasmic. The helical transmembrane segment at 115 to 135 (IFPYILMSVGAFLTLGFVIFS) threads the bilayer. Residues 136–152 (IHKGRRTKNESARKSNI) lie on the Extracellular side of the membrane.

It belongs to the EssA family.

The protein resides in the cell membrane. Its function is as follows. Component of the ESAT-6 secretion system (Ess). Required for the secretion of EsxA and EsxB. This Staphylococcus aureus (strain Mu50 / ATCC 700699) protein is ESAT-6 secretion machinery protein EssA.